Reading from the N-terminus, the 295-residue chain is Pyridoxal 5'-phosphate synthase subunit PdxS (295 aa).

D25 is a binding site for D-ribose 5-phosphate. The active-site Schiff-base intermediate with D-ribose 5-phosphate is the K82. D-ribose 5-phosphate is bound at residue G154. Position 166 (R166) interacts with D-glyceraldehyde 3-phosphate. D-ribose 5-phosphate is bound by residues G215 and 236 to 237; that span reads GS.

Belongs to the PdxS/SNZ family. In the presence of PdxT, forms a dodecamer of heterodimers.

It catalyses the reaction aldehydo-D-ribose 5-phosphate + D-glyceraldehyde 3-phosphate + L-glutamine = pyridoxal 5'-phosphate + L-glutamate + phosphate + 3 H2O + H(+). It participates in cofactor biosynthesis; pyridoxal 5'-phosphate biosynthesis. In terms of biological role, catalyzes the formation of pyridoxal 5'-phosphate from ribose 5-phosphate (RBP), glyceraldehyde 3-phosphate (G3P) and ammonia. The ammonia is provided by the PdxT subunit. Can also use ribulose 5-phosphate and dihydroxyacetone phosphate as substrates, resulting from enzyme-catalyzed isomerization of RBP and G3P, respectively. The chain is Pyridoxal 5'-phosphate synthase subunit PdxS from Heliobacterium modesticaldum (strain ATCC 51547 / Ice1).